We begin with the raw amino-acid sequence, 1150 residues long: RNA polymerase-associated protein CTR9 (1150 aa).

13 TPR repeats span residues 143-176 (VRAW…NPKN), 177-210 (VLPL…CRHT), 212-245 (ADLR…EPYN), 247-282 (SAMC…QTDH), 320-353 (AEAF…NNGE), 355-388 (TLAH…LPNN), 432-464 (YEAC…LVTN), 471-504 (PEML…LEEQ), 594-627 (PIVW…IFNN), 643-677 (FEQL…QPKN), 679-711 (YAAN…TSEF), 712-745 (YDVW…FRKE), and 748-781 (STLQ…QLDN). Coiled coils occupy residues 848 to 916 (AEEA…NLRL) and 972 to 1028 (ERRE…AKQS). The interval 935–1150 (KRRGGGGRKR…KKKVIESDSD (216 aa)) is disordered. Residues 975-992 (ERRKKDKAAKKASRKKRE) are compositionally biased toward basic residues. Basic and acidic residues-rich tracts occupy residues 993-1005 (RRDS…NRRD), 1013-1024 (EERDRKLQEKLS), 1060-1084 (DPRP…ETTT), and 1132-1150 (RDSD…SDSD).

Component of the PAF1 complex which consists of at least cdc-73, ctr-9, leo-1, pafo-1 and rtfo-1.

It is found in the nucleus. Component of the PAF1 complex which is a multifunctional complex involved in transcription initiation via genetic interactions with TATA-binding proteins, elongation and transcription-coupled histone modification. Ctr-9 is required for epidermal microtubule organization during morphogenesis. This chain is RNA polymerase-associated protein CTR9, found in Caenorhabditis elegans.